The following is a 306-amino-acid chain: Pentalenolactone F synthase (306 aa).

Fe cation contacts are provided by H110 and D112. Positions 138 and 258 each coordinate 2-oxoglutarate. Residue H273 coordinates Fe cation. R284 is a 2-oxoglutarate binding site.

Belongs to the TfdA dioxygenase family. Requires Fe(2+) as cofactor.

It carries out the reaction pentalenolactone D + 2 2-oxoglutarate + 2 O2 = pentalenolactone F + 2 succinate + 2 CO2 + H2O. The protein operates within antibiotic biosynthesis; neopentalenolactone biosynthesis. With respect to regulation, activated by ascorbate. In terms of biological role, catalyzes the Fe(2+) and alpha-ketoglutarate-dependent oxidation of pentalenolactone D to pentalenolactone F. Also able to catalyze the oxidation of pentalenolactone D to pentalenolactone E. In presence of neopentalenolactone D, mediates production of PL308 and possibly neopentalenolactone E. This chain is Pentalenolactone F synthase (ptlD), found in Streptomyces avermitilis (strain ATCC 31267 / DSM 46492 / JCM 5070 / NBRC 14893 / NCIMB 12804 / NRRL 8165 / MA-4680).